A 306-amino-acid chain; its full sequence is Pantothenate kinase (306 aa).

G91–S98 contacts ATP.

The protein belongs to the prokaryotic pantothenate kinase family.

The protein localises to the cytoplasm. It carries out the reaction (R)-pantothenate + ATP = (R)-4'-phosphopantothenate + ADP + H(+). Its pathway is cofactor biosynthesis; coenzyme A biosynthesis; CoA from (R)-pantothenate: step 1/5. This is Pantothenate kinase (coaA) from Streptococcus pyogenes serotype M3 (strain ATCC BAA-595 / MGAS315).